Reading from the N-terminus, the 89-residue chain is Small ribosomal subunit protein uS15 (89 aa).

Belongs to the universal ribosomal protein uS15 family. Part of the 30S ribosomal subunit. Forms a bridge to the 50S subunit in the 70S ribosome, contacting the 23S rRNA.

Functionally, one of the primary rRNA binding proteins, it binds directly to 16S rRNA where it helps nucleate assembly of the platform of the 30S subunit by binding and bridging several RNA helices of the 16S rRNA. Forms an intersubunit bridge (bridge B4) with the 23S rRNA of the 50S subunit in the ribosome. This is Small ribosomal subunit protein uS15 from Porphyromonas gingivalis (strain ATCC 33277 / DSM 20709 / CIP 103683 / JCM 12257 / NCTC 11834 / 2561).